The sequence spans 107 residues: Histone H4 (107 aa).

Residues 1-16 show a composition bias toward gly residues; sequence MPGRGKGGKGGKGYGK. The tract at residues 1–23 is disordered; the sequence is MPGRGKGGKGGKGYGKVGAKRHA. Residues 17-21 mediate DNA binding; that stretch reads VGAKR.

Belongs to the histone H4 family. As to quaternary structure, the nucleosome is a histone octamer containing two molecules each of H2A, H2B, H3 and H4 assembled in one H3-H4 heterotetramer and two H2A-H2B heterodimers. The octamer wraps approximately 147 bp of DNA.

The protein resides in the nucleus. It is found in the chromosome. Its function is as follows. Core component of nucleosome. Nucleosomes wrap and compact DNA into chromatin, limiting DNA accessibility to the cellular machineries which require DNA as a template. Histones thereby play a central role in transcription regulation, DNA repair, DNA replication and chromosomal stability. DNA accessibility is regulated via a complex set of post-translational modifications of histones, also called histone code, and nucleosome remodeling. The polypeptide is Histone H4 (Euplotes crassus).